The sequence spans 82 residues: Kappa-actitoxin-Avd4j (82 aa).

The signal sequence occupies residues 1-19 (MNKALFLCLVVLCAAVVFA). Residues 20–31 (AEDLQKAKHAPF) constitute a propeptide that is removed on maturation. Cystine bridges form between Cys38/Cys73, Cys40/Cys66, and Cys56/Cys74.

This sequence belongs to the sea anemone type 3 (BDS) potassium channel toxin family. In terms of tissue distribution, weakly expressed in the ectodermal tissue from the distal and proximal tentacles, body wall, and oral disk.

It is found in the secreted. The protein resides in the nematocyst. Its function is as follows. Blocks Kv3 voltage-gated potassium channels. Reduces blood pressure. The protein is Kappa-actitoxin-Avd4j of Anemonia viridis (Snakelocks anemone).